The following is a 346-amino-acid chain: Putative cytochrome bd menaquinol oxidase subunit II (346 aa).

9 consecutive transmembrane segments (helical) span residues 7–27 (ALIAISIIWGFVFIYAVMATM), 63–83 (VFIVAIVVALFSFFPGATFVL), 87–107 (LLIPGSMILLLLAIRSGFLVF), 119–139 (YISGISGFIIPAILILVLPVT), 164–184 (AYSFIGFAILSTLFLSSLLLA), 201–221 (KSALITGPISLLFAVCIMVTM), 236–256 (FSWIIASFITFVIAGIALFLP), 269–289 (LALVAIGIQYFLASYAYGRAH), and 312–332 (ALFATYIVAFIILFPGFFFFW).

It belongs to the cytochrome ubiquinol oxidase subunit 2 family.

The protein localises to the cell membrane. Its function is as follows. May have a role in sporulation. Can compensate for the loss of cytochrome aa3. This chain is Putative cytochrome bd menaquinol oxidase subunit II (ythB), found in Bacillus subtilis (strain 168).